A 203-amino-acid polypeptide reads, in one-letter code: Dephospho-CoA kinase (203 aa).

In terms of domain architecture, DPCK spans 5 to 203 (IVGLTGGIAS…VVYRVAASEH (199 aa)). ATP is bound at residue 13 to 18 (ASGKSA).

The protein belongs to the CoaE family.

It localises to the cytoplasm. The catalysed reaction is 3'-dephospho-CoA + ATP = ADP + CoA + H(+). It functions in the pathway cofactor biosynthesis; coenzyme A biosynthesis; CoA from (R)-pantothenate: step 5/5. Catalyzes the phosphorylation of the 3'-hydroxyl group of dephosphocoenzyme A to form coenzyme A. This is Dephospho-CoA kinase from Xanthomonas euvesicatoria pv. vesicatoria (strain 85-10) (Xanthomonas campestris pv. vesicatoria).